We begin with the raw amino-acid sequence, 70 residues long: NADH dehydrogenase [ubiquinone] 1 alpha subcomplex subunit 1 (70 aa).

The helical transmembrane segment at 1 to 21 (MWFEILPGLSVMGVCLLIPGL) threads the bilayer.

The protein belongs to the complex I NDUFA1 subunit family. As to quaternary structure, complex I is composed of 45 different subunits. As to expression, primarily expressed in heart and skeletal muscle.

The protein resides in the mitochondrion inner membrane. Functionally, accessory subunit of the mitochondrial membrane respiratory chain NADH dehydrogenase (Complex I), that is believed not to be involved in catalysis. Complex I functions in the transfer of electrons from NADH to the respiratory chain. The immediate electron acceptor for the enzyme is believed to be ubiquinone. The sequence is that of NADH dehydrogenase [ubiquinone] 1 alpha subcomplex subunit 1 (NDUFA1) from Homo sapiens (Human).